The chain runs to 137 residues: Proofreading thioesterase EntH (137 aa).

Glutamate 63 acts as the Nucleophile or proton acceptor in catalysis.

The protein belongs to the thioesterase PaaI family. In terms of assembly, homotetramer. Dimer of dimers. Interacts specifically with the aryl carrier protein (ArCP) domain of EntB.

The protein resides in the cytoplasm. It functions in the pathway siderophore biosynthesis; enterobactin biosynthesis. In terms of biological role, required for optimal enterobactin synthesis. Acts as a proofreading enzyme that prevents EntB misacylation by hydrolyzing the thioester bound existing between EntB and wrongly charged molecules. This Escherichia coli O6:H1 (strain CFT073 / ATCC 700928 / UPEC) protein is Proofreading thioesterase EntH.